A 383-amino-acid chain; its full sequence is S-adenosylmethionine synthase (383 aa).

Histidine 22 contributes to the ATP binding site. Position 24 (aspartate 24) interacts with Mg(2+). Residue glutamate 50 coordinates K(+). Residues glutamate 63 and glutamine 99 each coordinate L-methionine. The interval 99-109 (QSSEINQAVQS) is flexible loop. ATP-binding positions include 160–162 (DMK), aspartate 235, 241–242 (RK), serine 258, and lysine 262. Aspartate 235 lines the L-methionine pocket. An L-methionine-binding site is contributed by lysine 266.

Belongs to the AdoMet synthase family. In terms of assembly, homotetramer; dimer of dimers. Mg(2+) is required as a cofactor. The cofactor is K(+).

Its subcellular location is the cytoplasm. It catalyses the reaction L-methionine + ATP + H2O = S-adenosyl-L-methionine + phosphate + diphosphate. Its pathway is amino-acid biosynthesis; S-adenosyl-L-methionine biosynthesis; S-adenosyl-L-methionine from L-methionine: step 1/1. Its function is as follows. Catalyzes the formation of S-adenosylmethionine (AdoMet) from methionine and ATP. The overall synthetic reaction is composed of two sequential steps, AdoMet formation and the subsequent tripolyphosphate hydrolysis which occurs prior to release of AdoMet from the enzyme. The chain is S-adenosylmethionine synthase from Mycoplasma pneumoniae (strain ATCC 29342 / M129 / Subtype 1) (Mycoplasmoides pneumoniae).